We begin with the raw amino-acid sequence, 460 residues long: MALNVVILAAGKGTRMRSDLPKVLHPIAHKSMVQHVIDTAHKVGSDAIQLVYGYGADKLQASLGEQQLNWVLQAEQLGTGHAVAQASPHIADNDTVLILYGDVPLIQQSTLEALLAALPENGVAILTVNLADPMGYGRIVRTPCKGQEQGKVVGIIEQKDATAEQLLINEINTGIMAVPGKQLKIWLSRLSNNNAQGEYYLTDIIAMAHADGVAIDTAQPQSAIEVEGANNRVQLAQLERAYQAREAEKLMLAGANLRDPSRIDIRGDVTVGMDVMIDINVIFEGKVTLGNNVTIGAGAILIDCEIADNAEIKPYSIIEGAKLGVAASAGPFARLRPGAELKQDAHIGNFVEVKKAVIGVGSKAGHLAYLGDAVIGDGVNIGAGTITCNYDGANKHLTVIEDNVFVGSDTQLVAPVTISKGATLGAGSTITRDVGENELVITRVKQKHLTGWQRPVKIKK.

Positions 1–232 are pyrophosphorylase; sequence MALNVVILAA…AIEVEGANNR (232 aa). UDP-N-acetyl-alpha-D-glucosamine contacts are provided by residues 8–11, Lys22, Gln73, 78–79, 100–102, Gly137, Glu157, Asn172, and Asn230; these read LAAG, GT, and YGD. Asp102 lines the Mg(2+) pocket. Mg(2+) is bound at residue Asn230. A linker region spans residues 233–253; that stretch reads VQLAQLERAYQAREAEKLMLA. Residues 254 to 460 are N-acetyltransferase; it reads GANLRDPSRI…GWQRPVKIKK (207 aa). Positions 336 and 354 each coordinate UDP-N-acetyl-alpha-D-glucosamine. The active-site Proton acceptor is the His366. UDP-N-acetyl-alpha-D-glucosamine-binding residues include Tyr369 and Asn380. Residues Ala383, 389–390, Ser408, Ala426, and Arg443 contribute to the acetyl-CoA site; that span reads NY.

This sequence in the N-terminal section; belongs to the N-acetylglucosamine-1-phosphate uridyltransferase family. It in the C-terminal section; belongs to the transferase hexapeptide repeat family. In terms of assembly, homotrimer. It depends on Mg(2+) as a cofactor.

It is found in the cytoplasm. The enzyme catalyses alpha-D-glucosamine 1-phosphate + acetyl-CoA = N-acetyl-alpha-D-glucosamine 1-phosphate + CoA + H(+). The catalysed reaction is N-acetyl-alpha-D-glucosamine 1-phosphate + UTP + H(+) = UDP-N-acetyl-alpha-D-glucosamine + diphosphate. It functions in the pathway nucleotide-sugar biosynthesis; UDP-N-acetyl-alpha-D-glucosamine biosynthesis; N-acetyl-alpha-D-glucosamine 1-phosphate from alpha-D-glucosamine 6-phosphate (route II): step 2/2. It participates in nucleotide-sugar biosynthesis; UDP-N-acetyl-alpha-D-glucosamine biosynthesis; UDP-N-acetyl-alpha-D-glucosamine from N-acetyl-alpha-D-glucosamine 1-phosphate: step 1/1. The protein operates within bacterial outer membrane biogenesis; LPS lipid A biosynthesis. Catalyzes the last two sequential reactions in the de novo biosynthetic pathway for UDP-N-acetylglucosamine (UDP-GlcNAc). The C-terminal domain catalyzes the transfer of acetyl group from acetyl coenzyme A to glucosamine-1-phosphate (GlcN-1-P) to produce N-acetylglucosamine-1-phosphate (GlcNAc-1-P), which is converted into UDP-GlcNAc by the transfer of uridine 5-monophosphate (from uridine 5-triphosphate), a reaction catalyzed by the N-terminal domain. The sequence is that of Bifunctional protein GlmU from Shewanella baltica (strain OS185).